The chain runs to 188 residues: Acireductone dioxygenase (188 aa).

Positions 97, 99, 103, and 141 each coordinate Fe(2+). Positions 97, 99, 103, and 141 each coordinate Ni(2+).

It belongs to the acireductone dioxygenase (ARD) family. As to quaternary structure, monomer. It depends on Fe(2+) as a cofactor. Requires Ni(2+) as cofactor.

The enzyme catalyses 1,2-dihydroxy-5-(methylsulfanyl)pent-1-en-3-one + O2 = 3-(methylsulfanyl)propanoate + CO + formate + 2 H(+). The catalysed reaction is 1,2-dihydroxy-5-(methylsulfanyl)pent-1-en-3-one + O2 = 4-methylsulfanyl-2-oxobutanoate + formate + 2 H(+). It participates in amino-acid biosynthesis; L-methionine biosynthesis via salvage pathway; L-methionine from S-methyl-5-thio-alpha-D-ribose 1-phosphate: step 5/6. Catalyzes 2 different reactions between oxygen and the acireductone 1,2-dihydroxy-3-keto-5-methylthiopentene (DHK-MTPene) depending upon the metal bound in the active site. Fe-containing acireductone dioxygenase (Fe-ARD) produces formate and 2-keto-4-methylthiobutyrate (KMTB), the alpha-ketoacid precursor of methionine in the methionine recycle pathway. Ni-containing acireductone dioxygenase (Ni-ARD) produces methylthiopropionate, carbon monoxide and formate, and does not lie on the methionine recycle pathway. The sequence is that of Acireductone dioxygenase from Xanthomonas oryzae pv. oryzae (strain MAFF 311018).